The chain runs to 408 residues: Bone morphogenetic protein 4 (408 aa).

The first 19 residues, 1-19, serve as a signal peptide directing secretion; it reads MIPGNRMLMVVLLCQVLLG. The propeptide occupies 20 to 292; it reads GASHASLIPE…HTLTRRRAKR (273 aa). The residue at position 91 (Ser91) is a Phosphoserine. The disordered stretch occupies residues 91-111; it reads SGEEEEEEQSQGTGLEYPERP. Asn144 and Asn209 each carry an N-linked (GlcNAc...) asparagine glycan. A disordered region spans residues 281–307; it reads RGHTLTRRRAKRSPKHHPQRSRKKNKN. The span at 284–307 shows a compositional bias: basic residues; that stretch reads TLTRRRAKRSPKHHPQRSRKKNKN. 3 disulfide bridges follow: Cys308–Cys373, Cys337–Cys405, and Cys341–Cys407. N-linked (GlcNAc...) asparagine glycosylation is found at Asn350 and Asn365.

It belongs to the TGF-beta family. In terms of assembly, homodimer; disulfide-linked. Interacts with SOSTDC1, GREM2, RGMA, RGMB and RGMC. Part of a complex consisting of TWSG1 and CHRD. Interacts with the serine proteases, HTRA1 and HTRA3; the interaction with either inhibits BMP4-mediated signaling. The HTRA protease activity is required for this inhibition. Interacts with FBN1 (via N-terminal domain) and FBN2. Interacts with type I receptor BMPR1A. Interacts with type II receptor BMPR2. Interacts with FSTL1; this interaction inhibits the activation of the BMP4/Smad1/5/8 signaling pathway. Interacts with SCUBE3. Interacts with TGFBR3. As to expression, in the cochlea, detected in nonprosensory regions and outer sulcus (at protein level). Prior to gastrulation, expressed in the extraembryonic ectoderm. Later, expressed in the extraembryonic mesoderm.

The protein localises to the secreted. It is found in the extracellular space. It localises to the extracellular matrix. Functionally, growth factor of the TGF-beta superfamily that plays essential roles in many developmental processes, including neurogenesis, vascular development, angiogenesis and osteogenesis. Acts in concert with PTHLH/PTHRP to stimulate ductal outgrowth during embryonic mammary development and to inhibit hair follicle induction. Initiates the canonical BMP signaling cascade by associating with type I receptor BMPR1A and type II receptor BMPR2. Once all three components are bound together in a complex at the cell surface, BMPR2 phosphorylates and activates BMPR1A. In turn, BMPR1A propagates signal by phosphorylating SMAD1/5/8 that travel to the nucleus and act as activators and repressors of transcription of target genes. Positively regulates the expression of odontogenic development regulator MSX1 via inducing the IPO7-mediated import of SMAD1 to the nucleus. Required for MSX1-mediated mesenchymal molar tooth bud development beyond the bud stage, via promoting Wnt signaling. Acts as a positive regulator of odontoblast differentiation during mesenchymal tooth germ formation, expression is repressed during the bell stage by MSX1-mediated inhibition of CTNNB1 signaling. Able to induce its own expression in dental mesenchymal cells and also in the neighboring dental epithelial cells via an MSX1-mediated pathway. Can also signal through non-canonical BMP pathways such as ERK/MAP kinase, PI3K/Akt or SRC cascades. For example, induces SRC phosphorylation which, in turn, activates VEGFR2, leading to an angiogenic response. The sequence is that of Bone morphogenetic protein 4 from Mus musculus (Mouse).